Here is a 432-residue protein sequence, read N- to C-terminus: Serine--tRNA ligase (432 aa).

Residue threonine 236 to glutamate 238 coordinates L-serine. Arginine 267–glutamate 269 provides a ligand contact to ATP. Glutamate 290 lines the L-serine pocket. ATP is bound at residue glutamate 354–serine 357. Position 390 (serine 390) interacts with L-serine.

It belongs to the class-II aminoacyl-tRNA synthetase family. Type-1 seryl-tRNA synthetase subfamily. Homodimer. The tRNA molecule binds across the dimer.

The protein resides in the cytoplasm. It catalyses the reaction tRNA(Ser) + L-serine + ATP = L-seryl-tRNA(Ser) + AMP + diphosphate + H(+). The enzyme catalyses tRNA(Sec) + L-serine + ATP = L-seryl-tRNA(Sec) + AMP + diphosphate + H(+). It functions in the pathway aminoacyl-tRNA biosynthesis; selenocysteinyl-tRNA(Sec) biosynthesis; L-seryl-tRNA(Sec) from L-serine and tRNA(Sec): step 1/1. Its function is as follows. Catalyzes the attachment of serine to tRNA(Ser). Is also able to aminoacylate tRNA(Sec) with serine, to form the misacylated tRNA L-seryl-tRNA(Sec), which will be further converted into selenocysteinyl-tRNA(Sec). This chain is Serine--tRNA ligase, found in Pseudoalteromonas atlantica (strain T6c / ATCC BAA-1087).